The sequence spans 1951 residues: Sodium channel protein type 3 subunit alpha (1951 aa).

The Cytoplasmic portion of the chain corresponds to 1-128; sequence MAQALLVPPG…KIAIKILVHS (128 aa). The segment at 28 to 60 is disordered; that stretch reads RAAEEKAKKPKKEQDIDDENKPKPNSDLEAGKN. Residues 46 to 57 show a composition bias toward basic and acidic residues; sequence ENKPKPNSDLEA. One copy of the I repeat lies at 110-455; that stretch reads ILTPLNPVRK…QQMLEQLKKQ (346 aa). The chain crosses the membrane as a helical span at residues 129–146; sequence LFSMLIMCTILTNCVFMT. The Extracellular portion of the chain corresponds to 147-152; the sequence is LSNPPD. A helical membrane pass occupies residues 153-174; sequence WTKNVEYTFTGIYTFESLIKIL. Over 175 to 188 the chain is Cytoplasmic; sequence ARGFCLEDFTFLRD. The chain crosses the membrane as a helical span at residues 189–206; the sequence is PWNWLDFSVIVMAYVTEF. Residues 207–213 lie on the Extracellular side of the membrane; sequence VDLGNVS. The N-linked (GlcNAc...) asparagine glycan is linked to Asn-211. A helical transmembrane segment spans residues 214–235; the sequence is ALRTFRVLRALKTISVIPGLKT. Topologically, residues 236–249 are cytoplasmic; sequence IVGALIQSVKKLSD. The chain crosses the membrane as a helical span at residues 250-269; that stretch reads VMILTVFCLSVFALIGLQLF. Residues 270 to 369 lie on the Extracellular side of the membrane; that stretch reads MGNLRNKCSQ…NYGYTSFDTF (100 aa). 5 N-linked (GlcNAc...) asparagine glycosylation sites follow: Asn-290, Asn-296, Asn-302, Asn-307, and Asn-339. The pore-forming intramembrane region spans 370–386; the sequence is SWAFLSLFRLMTQDYWE. At 387 to 397 the chain is on the extracellular side; it reads NLYQLTLRAAG. Residues 398–424 form a helical membrane-spanning segment; it reads KTYMIFFVLVIFLGSFYLVNLILAVVA. Residues 425–712 lie on the Cytoplasmic side of the membrane; that stretch reads MAYEEQNQAT…LVNLIVMDPF (288 aa). A phosphoserine mark is found at Ser-484, Ser-485, and Ser-486. Disordered regions lie at residues 493–529 and 587–633; these read SKSAKEWRNRRKKRRQREHLEGNHRADGDRFPKSESE and VGSE…TEVR. Positions 500 to 509 are enriched in basic residues; that stretch reads RNRRKKRRQR. Composition is skewed to basic and acidic residues over residues 510–529 and 596–622; these read EHLEGNHRADGDRFPKSESE and DEHSTFEDSESRRDSLFVPHRPGERRN. The stretch at 693–965 is one II repeat; that stretch reads CCDAWLKVKH…QIAVGRMQKG (273 aa). A helical transmembrane segment spans residues 713-730; the sequence is VDLAITICIVLNTLFMAM. Residues 731–738 are Extracellular-facing; sequence EHYPMTQQ. A helical membrane pass occupies residues 739-763; it reads FSSVLTVGNLVFTGIFTAEMVLKII. The Cytoplasmic portion of the chain corresponds to 764–773; that stretch reads AMDPYYYFQE. Residues 774–793 traverse the membrane as a helical segment; sequence GWNIFDGIIVSLSLMELGLA. Residues 794–797 are Extracellular-facing; the sequence is NVEG. A helical transmembrane segment spans residues 798–816; the sequence is LSVLRSFRLLRVFKLAKSW. Residues 817 to 834 are Cytoplasmic-facing; the sequence is PTLNMLIKIIGNSVGALG. A helical transmembrane segment spans residues 835–855; sequence NLTLVLAIIVFIFAVVGMQLF. The Extracellular portion of the chain corresponds to 856-880; that stretch reads GKSYKECVCKINVDCKLPRWHMNDF. A disulfide bond links Cys-864 and Cys-870. The segment at residues 881–896 is an intramembrane region (pore-forming); it reads FHSFLIVFRVLCGEWI. Residues 897–907 lie on the Extracellular side of the membrane; the sequence is ETMWDCMEVAG. Cys-902 and Cys-911 form a disulfide bridge. A helical transmembrane segment spans residues 908–934; the sequence is QTMCLIVFMLVMVIGNLVVLNLFLALL. The Cytoplasmic segment spans residues 935–1156; it reads LSSFSSDNLA…RKTCYSIVEH (222 aa). Residues 1068-1112 are disordered; that stretch reads TEEFSSESELEESKEKLNATSSSEGSTVDVAPPREGEQAEIEPEE. The stretch at 1139–1450 is one III repeat; it reads KGKIWWNLRK…KKYYNAMKKL (312 aa). The chain crosses the membrane as a helical span at residues 1157 to 1177; it reads NWFETFIVFMILLSSGALAFE. The Extracellular portion of the chain corresponds to 1178-1189; that stretch reads DIYIEQRKTIKT. Residues 1190–1211 form a helical membrane-spanning segment; the sequence is MLEYADKVFTYIFILEMLLKWV. Topologically, residues 1212-1217 are cytoplasmic; the sequence is AYGFQT. A helical transmembrane segment spans residues 1218-1243; that stretch reads YFTNAWCWLDFLIVDVSLVSLVANAL. Residues 1244–1252 lie on the Extracellular side of the membrane; it reads GYSELGAIK. A helical membrane pass occupies residues 1253 to 1271; it reads SLRTLRALRPLRALSRFEG. At 1272–1284 the chain is on the cytoplasmic side; the sequence is MRVVVNALVGAIP. Residues 1285–1307 traverse the membrane as a helical segment; it reads SIMNVLLVCLIFWLIFSIMGVNL. The Extracellular portion of the chain corresponds to 1308–1353; sequence FAGKFYHCVNTTTGNMFEIKEVNNFSDCQALGKQARWKNVKVNFDN. Cys-1315 and Cys-1335 form a disulfide bridge. Asn-1317 and Asn-1331 each carry an N-linked (GlcNAc...) asparagine glycan. Positions 1354 to 1370 form an intramembrane region, pore-forming; sequence VGAGYLALLQVATFKGW. Topologically, residues 1371 to 1393 are extracellular; sequence MDIMYAAVDSRDVKLQPIYEENL. The helical transmembrane segment at 1394–1419 threads the bilayer; sequence YMYLYFVIFIIFGSFFTLNLFIGVII. Topologically, residues 1420–1477 are cytoplasmic; the sequence is DNFNQQKKKFGGQDIFMTEEQKKYYNAMKKLGSKKPQKPIPRPANKFQGMVFDFVTRQ. Ser-1452 bears the Phosphoserine; by PKC mark. Residues 1459-1757 form an IV repeat; that stretch reads IPRPANKFQG…WEKFDPDATQ (299 aa). A helical membrane pass occupies residues 1478–1496; the sequence is VFDISIMILICLNMVTMMV. Residues 1497–1504 lie on the Extracellular side of the membrane; that stretch reads ETDDQSKY. The chain crosses the membrane as a helical span at residues 1505 to 1528; that stretch reads MTLVLSRINLVFIVLFTGEFLLKL. Topologically, residues 1529 to 1538 are cytoplasmic; it reads ISLRYYYFTI. The helical transmembrane segment at 1539-1556 threads the bilayer; the sequence is GWNIFDFVVVILSIVGMF. The Extracellular portion of the chain corresponds to 1557 to 1568; that stretch reads LAELIEKYFVSP. Residues 1569–1591 traverse the membrane as a helical segment; sequence TLFRVIRLARIGRILRLIKGAKG. Topologically, residues 1592–1604 are cytoplasmic; that stretch reads IRTLLFALMMSLP. A helical membrane pass occupies residues 1605–1628; that stretch reads ALFNIGLLLFLVMFIYAIFGMSNF. Residues 1629-1650 are Extracellular-facing; that stretch reads AYVKKEAGIDDMFNFETFGNSM. Positions 1651–1663 form an intramembrane region, pore-forming; the sequence is ICLFQITTSAGWD. Residues 1664 to 1695 lie on the Extracellular side of the membrane; that stretch reads GLLAPILNSAPPDCDPDAIHPGSSVKGDCGNP. A helical membrane pass occupies residues 1696-1721; sequence SVGIFFFVSYIIISFLVVVNMYIAVI. Topologically, residues 1722 to 1951 are cytoplasmic; that stretch reads LENFSVATEE…KGKEVRENQK (230 aa). The IQ domain occupies 1851 to 1880; that stretch reads EEVSAAIIQRNYRCYLLKQRLKNISSKYDK. Positions 1898–1951 are disordered; that stretch reads DKLNGNSTPEKTDGSSSTTSPPSYDSVTKPDKEKFEKDKPEKEIKGKEVRENQK. Over residues 1925–1951 the composition is skewed to basic and acidic residues; it reads TKPDKEKFEKDKPEKEIKGKEVRENQK.

Belongs to the sodium channel (TC 1.A.1.10) family. Nav1.3/SCN3A subfamily. Heterooligomer of an alpha subunit, SCN3A, and 1 to 3 regulatory beta subunits including SCN1B and SCN2B; disulfide-linked with some beta subunits like SCN2B. Interacts with NEDD4L; could regulate expression of SCN3A at the plasma membrane through ubiquitination-regulated endocytosis. Interacts with the conotoxin GVIIJ. Interacts with the spider beta/delta-theraphotoxin-Pre1a. Interacts with the spider RTX-VII toxin (AC P0DL75). Post-translationally, may be ubiquitinated by NEDD4L; which would promote its endocytosis. Phosphorylation at Ser-1452 by PKC in a highly conserved cytoplasmic loop slows inactivation of the sodium channel and reduces peak sodium currents.

Its subcellular location is the cell membrane. The protein localises to the basal cell membrane. The catalysed reaction is Na(+)(in) = Na(+)(out). Pore-forming subunit of Nav1.3, a voltage-gated sodium (Nav) channel that directly mediates the depolarizing phase of action potentials in excitable membranes. Navs, also called VGSCs (voltage-gated sodium channels) or VDSCs (voltage-dependent sodium channels), operate by switching between closed and open conformations depending on the voltage difference across the membrane. In the open conformation they allow Na(+) ions to selectively pass through the pore, along their electrochemical gradient. The influx of Na+ ions provokes membrane depolarization, initiating the propagation of electrical signals throughout cells and tissues. In some secretory cell types, it also participates in cell excitability through membrane depolarization and regulates cells responsiveness to stimuli triggering secretion. For instance, it controls the release of serotonin/5-hydroxytryptamine by enterochromaffin cells and is required for both glucagon- and glucose-induced insulin secretion in pancreatic endocrine cells. The chain is Sodium channel protein type 3 subunit alpha from Rattus norvegicus (Rat).